The following is a 413-amino-acid chain: Arginine biosynthesis bifunctional protein ArgJ (413 aa).

Substrate contacts are provided by threonine 154, lysine 180, threonine 191, glutamate 277, asparagine 408, and threonine 413. Threonine 191 serves as the catalytic Nucleophile.

This sequence belongs to the ArgJ family. As to quaternary structure, heterotetramer of two alpha and two beta chains.

The protein localises to the cytoplasm. It carries out the reaction N(2)-acetyl-L-ornithine + L-glutamate = N-acetyl-L-glutamate + L-ornithine. The catalysed reaction is L-glutamate + acetyl-CoA = N-acetyl-L-glutamate + CoA + H(+). The protein operates within amino-acid biosynthesis; L-arginine biosynthesis; L-ornithine and N-acetyl-L-glutamate from L-glutamate and N(2)-acetyl-L-ornithine (cyclic): step 1/1. It functions in the pathway amino-acid biosynthesis; L-arginine biosynthesis; N(2)-acetyl-L-ornithine from L-glutamate: step 1/4. Catalyzes two activities which are involved in the cyclic version of arginine biosynthesis: the synthesis of N-acetylglutamate from glutamate and acetyl-CoA as the acetyl donor, and of ornithine by transacetylation between N(2)-acetylornithine and glutamate. The sequence is that of Arginine biosynthesis bifunctional protein ArgJ from Synechocystis sp. (strain ATCC 27184 / PCC 6803 / Kazusa).